Here is a 258-residue protein sequence, read N- to C-terminus: Small ribosomal subunit protein uS2 (258 aa).

It belongs to the universal ribosomal protein uS2 family.

This is Small ribosomal subunit protein uS2 from Streptococcus suis (strain 98HAH33).